The chain runs to 160 residues: MSGQVTLQSSDSVDITVERAVAERSMLIKNLLEDLGESEEPVPIPNVNESVLKKVIEWCTHHKNDPQSTGEDDDNRRRTTEIDEWDQKFMQVDQEMLFEIILAANYLDIKALLDVGCKTVANMIKGKSPEEIRKTFNIQNDFTPEEEDQIRRENEWAEDR.

The interaction with the F-box domain of F-box proteins stretch occupies residues 101-160 (ILAANYLDIKALLDVGCKTVANMIKGKSPEEIRKTFNIQNDFTPEEEDQIRRENEWAEDR).

This sequence belongs to the SKP1 family. Component of the SCF (SKP1-CUL1-F-box protein) E3 ubiquitin ligase complexes.

The protein operates within protein modification; protein ubiquitination. Functionally, essential component of the SCF (SKP1-CUL1-F-box protein) E3 ubiquitin ligase complexes, which mediate the ubiquitination and subsequent proteasomal degradation of target proteins. Controls sulfur metabolite repression, probably by mediating the inactivation or degradation of the metR transcription factor. This chain is E3 ubiquitin ligase complex SCF subunit sconC (sconC), found in Talaromyces marneffei (strain ATCC 18224 / CBS 334.59 / QM 7333) (Penicillium marneffei).